Reading from the N-terminus, the 354-residue chain is Chorismate synthase (354 aa).

Arginine 48 contributes to the NADP(+) binding site. Residues 125–127 (RSS), 239–240 (NA), glycine 280, 295–299 (KPVAT), and arginine 321 each bind FMN.

Belongs to the chorismate synthase family. Homotetramer. FMNH2 is required as a cofactor.

The enzyme catalyses 5-O-(1-carboxyvinyl)-3-phosphoshikimate = chorismate + phosphate. The protein operates within metabolic intermediate biosynthesis; chorismate biosynthesis; chorismate from D-erythrose 4-phosphate and phosphoenolpyruvate: step 7/7. Catalyzes the anti-1,4-elimination of the C-3 phosphate and the C-6 proR hydrogen from 5-enolpyruvylshikimate-3-phosphate (EPSP) to yield chorismate, which is the branch point compound that serves as the starting substrate for the three terminal pathways of aromatic amino acid biosynthesis. This reaction introduces a second double bond into the aromatic ring system. The sequence is that of Chorismate synthase from Christiangramia forsetii (strain DSM 17595 / CGMCC 1.15422 / KT0803) (Gramella forsetii).